The primary structure comprises 199 residues: MRLTAKQIIWLKVCLHLVGFLPLLWLFWAINQGGLSADPVKDIQHFTGRTALKFLLATLLISPLARYAKQPLLIRTRRLLGLWCFVWATLHLTSYALLELGIHNLALLGSELISRPYLTLGIISWLALLALTLTSTQFAQRKLGKRWQTLHNVVYLVAILAPVHYLWSVKVLSPQPVIYAALALVLLALRYRKFRQWRR.

4 consecutive transmembrane segments (helical) span residues 8-28 (IIWL…WLFW), 82-102 (LWCF…ELGI), 116-136 (PYLT…LTST), and 153-173 (VVYL…KVLS).

Belongs to the MsrQ family. Heterodimer of a catalytic subunit (MsrP) and a heme-binding subunit (MsrQ). The cofactor is FMN. It depends on heme b as a cofactor.

The protein localises to the cell inner membrane. Its function is as follows. Part of the MsrPQ system that repairs oxidized periplasmic proteins containing methionine sulfoxide residues (Met-O), using respiratory chain electrons. Thus protects these proteins from oxidative-stress damage caused by reactive species of oxygen and chlorine generated by the host defense mechanisms. MsrPQ is essential for the maintenance of envelope integrity under bleach stress, rescuing a wide series of structurally unrelated periplasmic proteins from methionine oxidation, including the primary periplasmic chaperone SurA and the lipoprotein Pal. MsrQ provides electrons for reduction to the reductase catalytic subunit MsrP, using the quinone pool of the respiratory chain. The sequence is that of Protein-methionine-sulfoxide reductase heme-binding subunit MsrQ from Salmonella arizonae (strain ATCC BAA-731 / CDC346-86 / RSK2980).